A 444-amino-acid polypeptide reads, in one-letter code: E3 ubiquitin-protein ligase RNFT2 (444 aa).

Residues 1–181 are Extracellular-facing; it reads MWLFTVNQVL…ILLAKLCFQH (181 aa). Disordered stretches follow at residues 13–41 and 92–149; these read MQRR…ASVD and PASR…PGTP. Over residues 107 to 121 the composition is skewed to basic residues; that stretch reads YHHRQPHHHFHHGGH. A compositionally biased stretch (basic and acidic residues) spans 131-140; it reads GGDHRGHSEE. Residues 182–202 form a helical membrane-spanning segment; the sequence is KLGIAVCIGMASTFAYANSTL. Topologically, residues 203–214 are cytoplasmic; it reads REQVSLKEKRSV. A helical transmembrane segment spans residues 215–235; that stretch reads LVILWILAFLAGNTLYVLYTF. Residues 236-255 are Extracellular-facing; the sequence is SSQQLYNSLIFLKPNLEMLD. Residues 256–276 traverse the membrane as a helical segment; it reads FFDLLWIVGIADFVLKYITIA. Residues 277–329 lie on the Cytoplasmic side of the membrane; it reads LKCLIVALPKIILAVKSKGKFYLVIEELSQLFRSLVPIQLWYKYIMGDDSSNS. Residues 330–350 form a helical membrane-spanning segment; that stretch reads YFLGGVLIVLYSLCKSFDICG. At 351–444 the chain is on the extracellular side; the sequence is RVGGVRKALK…GATSAHFQVY (94 aa). Residues 384–422 form an RING-type zinc finger; sequence CAICQAEFREPLILLCQHVFCEECLCLWLDRERTCPLCR.

The protein localises to the membrane. E3 ubiquitin-protein ligase that negatively regulates IL3-dependent cellular responses through IL3RA ubiquitination and degradation by the proteasome, having an anti-inflammatory effect. This chain is E3 ubiquitin-protein ligase RNFT2, found in Homo sapiens (Human).